The chain runs to 164 residues: 3-dehydroquinate dehydratase (164 aa).

Residue Tyr-22 is the Proton acceptor of the active site. The substrate site is built by Asn-73, His-79, and Asp-86. His-99 serves as the catalytic Proton donor. Residues 100–101 and Arg-110 contribute to the substrate site; that span reads IS.

It belongs to the type-II 3-dehydroquinase family. As to quaternary structure, homododecamer.

It catalyses the reaction 3-dehydroquinate = 3-dehydroshikimate + H2O. It participates in metabolic intermediate biosynthesis; chorismate biosynthesis; chorismate from D-erythrose 4-phosphate and phosphoenolpyruvate: step 3/7. Its function is as follows. Catalyzes a trans-dehydration via an enolate intermediate. The polypeptide is 3-dehydroquinate dehydratase (Aliarcobacter butzleri (strain RM4018) (Arcobacter butzleri)).